Reading from the N-terminus, the 234-residue chain is uncharacterized protein (234 aa).

4 LRR repeats span residues 44–63, 64–84, 85–107, and 111–134; these read LEFL…LPKL, KLRK…EKCP, NLTH…PLKQ, and LKSL…VFKL. Positions 161–234 are disordered; sequence EGLDDEEEGE…GEEERGQKRK (74 aa). The span at 163–226 shows a compositional bias: acidic residues; sequence LDDEEEGEHE…GEEDEEELGE (64 aa).

This sequence belongs to the ANP32 family. In terms of tissue distribution, expressed in activated stem cells, such as mobilized CD34+ cells and cord blood CD34+ cells, but not in resting bone marrow CD34+ cells. Expressed in a variety of neoplastic cell lines, mainly in prostatic adenocarcinoma cell lines. Not expressed in normal prostatic tissue.

This is an uncharacterized protein from Homo sapiens (Human).